The primary structure comprises 432 residues: Tubulin-specific chaperone cofactor E-like protein (432 aa).

LRR repeat units follow at residues 69–94, 95–117, 118–140, 143–167, 168–191, 193–217, and 218–242; these read ASHV…ILKN, LPHL…HELP, VSTL…QSFL, LPKV…EPIS, TTVR…NVVK, FPNV…HFEQ, and LPFW…QLNR. The LRRCT stretch occupies residues 254-295; sequence IPLLDALTNEERLHLIIGRLHHLRVLNGSKISSEQREQSERF. A ubiquitin-like (UBL) region spans residues 324–415; sequence VTIDLTPKKE…GDSFLVQEKI (92 aa).

The protein localises to the cytoplasm. Its subcellular location is the cytoskeleton. Functionally, acts as a regulator of tubulin stability. Involved in microtubule-dependent neuronal function. May be involved in tubulin acetylation/deacetylation pathway. This is Tubulin-specific chaperone cofactor E-like protein from Caenorhabditis elegans.